Here is a 407-residue protein sequence, read N- to C-terminus: Eukaryotic initiation factor 4A-II (407 aa).

Residues Met1 to Val23 are disordered. The Q motif motif lies at Asp33–Gln61. The region spanning Ile64 to Ile235 is the Helicase ATP-binding domain. Ala77 to Thr84 provides a ligand contact to ATP. The short motif at Asp183 to Asp186 is the DEAD box element. Residues Gly246–Ile407 form the Helicase C-terminal domain.

The protein belongs to the DEAD box helicase family. eIF4A subfamily. As to quaternary structure, eIF4F is a multi-subunit complex, the composition of which varies with external and internal environmental conditions. It is composed of at least EIF4A, EIF4E and EIF4G1/EIFFG3. Interacts with EIF4E.

It catalyses the reaction ATP + H2O = ADP + phosphate + H(+). ATP-dependent RNA helicase which is a subunit of the eIF4F complex involved in cap recognition and is required for mRNA binding to ribosome. In the current model of translation initiation, eIF4A unwinds RNA secondary structures in the 5'-UTR of mRNAs which is necessary to allow efficient binding of the small ribosomal subunit, and subsequent scanning for the initiator codon. The sequence is that of Eukaryotic initiation factor 4A-II (EIF4A2) from Gallus gallus (Chicken).